Here is a 353-residue protein sequence, read N- to C-terminus: UPF0283 membrane protein KPK_3110 (353 aa).

Transmembrane regions (helical) follow at residues 70–90 (MVSA…VQWT), 99–119 (WIAL…VGSV), and 213–233 (ESTL…FIAW).

Belongs to the UPF0283 family.

It localises to the cell inner membrane. The polypeptide is UPF0283 membrane protein KPK_3110 (Klebsiella pneumoniae (strain 342)).